Here is a 95-residue protein sequence, read N- to C-terminus: Osteocalcin-related protein (95 aa).

Positions 1–23 (MRTLSLLTLLALAALCLSDLTDA) are cleaved as a signal peptide. A propeptide spanning residues 24–49 (TPTGPESDKAFMSKQEGNKVVNRLRR) is cleaved from the precursor. Residues 46–92 (RLRRYLGASVPSPDPLEPTRELCELDPACDELSNQYGLKTAYRRIYG) enclose the Gla domain. Positions 62, 66, 69, and 75 each coordinate Ca(2+). 4-carboxyglutamate occurs at positions 66 and 69. A disulfide bridge links cysteine 68 with cysteine 74.

The protein belongs to the osteocalcin/matrix Gla protein family. Post-translationally, gamma-carboxyglutamic acid residues are formed by vitamin K dependent carboxylation. These residues are essential for the binding of calcium. In terms of tissue distribution, expressed in kidney and lung, but not in bone.

It localises to the secreted. Functionally, binds strongly to apatite and calcium. The protein is Osteocalcin-related protein of Mus musculus (Mouse).